The sequence spans 144 residues: Granulocyte-macrophage colony-stimulating factor (144 aa).

Positions 1 to 17 (MWLQNLLFLGIVVYSFS) are cleaved as a signal peptide. S22 carries O-linked (GalNAc...) serine glycosylation. T27 is a glycosylation site (O-linked (GalNAc...) threonine). Cystine bridges form between C71–C113 and C105–C138. N-linked (GlcNAc...) asparagine glycosylation is present at N86.

It belongs to the GM-CSF family. As to quaternary structure, monomer. The signaling GM-CSF receptor complex is a dodecamer of two head-to-head hexamers of two alpha, two beta, and two ligand subunits.

It localises to the secreted. Its function is as follows. Cytokine that stimulates the growth and differentiation of hematopoietic precursor cells from various lineages, including granulocytes, macrophages, eosinophils and erythrocytes. The chain is Granulocyte-macrophage colony-stimulating factor (Csf2) from Rattus norvegicus (Rat).